A 104-amino-acid chain; its full sequence is NADH-quinone oxidoreductase subunit K (104 aa).

Helical transmembrane passes span 4 to 24, 31 to 51, and 67 to 87; these read VPASAYLTLAIILFCIGLFGA, VIVLVCIELMLNAANLNLVAF, and LFTMAVAAAEAAVGLAILIAL.

It belongs to the complex I subunit 4L family. In terms of assembly, NDH-1 is composed of 14 different subunits. Subunits NuoA, H, J, K, L, M, N constitute the membrane sector of the complex.

The protein localises to the cell membrane. The catalysed reaction is a quinone + NADH + 5 H(+)(in) = a quinol + NAD(+) + 4 H(+)(out). Functionally, NDH-1 shuttles electrons from NADH, via FMN and iron-sulfur (Fe-S) centers, to quinones in the respiratory chain. The immediate electron acceptor for the enzyme in this species is believed to be a menaquinone. Couples the redox reaction to proton translocation (for every two electrons transferred, four hydrogen ions are translocated across the cytoplasmic membrane), and thus conserves the redox energy in a proton gradient. This chain is NADH-quinone oxidoreductase subunit K, found in Bacillus cereus (strain G9842).